Reading from the N-terminus, the 626-residue chain is Chaperone protein HtpG (626 aa).

The tract at residues Met-1 to Arg-332 is a; substrate-binding. The segment at Glu-333–Lys-546 is b. The c stretch occupies residues Met-547–Arg-626.

Belongs to the heat shock protein 90 family. In terms of assembly, homodimer.

Its subcellular location is the cytoplasm. Molecular chaperone. Has ATPase activity. This chain is Chaperone protein HtpG, found in Chlorobium phaeobacteroides (strain DSM 266 / SMG 266 / 2430).